The following is a 147-amino-acid chain: 3-dehydroquinate dehydratase (147 aa).

Residue Tyr-23 is the Proton acceptor of the active site. 3 residues coordinate substrate: Asn-75, His-81, and Asp-88. Residue His-101 is the Proton donor of the active site. Residues 102–103 (LS) and Arg-112 each bind substrate.

Belongs to the type-II 3-dehydroquinase family. As to quaternary structure, homododecamer.

The catalysed reaction is 3-dehydroquinate = 3-dehydroshikimate + H2O. Its pathway is metabolic intermediate biosynthesis; chorismate biosynthesis; chorismate from D-erythrose 4-phosphate and phosphoenolpyruvate: step 3/7. Functionally, catalyzes a trans-dehydration via an enolate intermediate. The sequence is that of 3-dehydroquinate dehydratase from Stutzerimonas stutzeri (strain A1501) (Pseudomonas stutzeri).